Consider the following 43-residue polypeptide: Protein PsbN (43 aa).

The chain crosses the membrane as a helical span at residues 7–27; sequence VAIFISGLLVSFTGYALYTAF.

This sequence belongs to the PsbN family.

It localises to the plastid. The protein resides in the chloroplast thylakoid membrane. May play a role in photosystem I and II biogenesis. The polypeptide is Protein PsbN (Daucus carota (Wild carrot)).